A 295-amino-acid chain; its full sequence is GTPase Era (295 aa).

Residues 7-176 (KTVSVCIIGR…ITSKAKIAPW (170 aa)) form the Era-type G domain. A G1 region spans residues 15-22 (GRPNSGKS). 15 to 22 (GRPNSGKS) contacts GTP. Residues 41–45 (QTTRS) are G2. A G3 region spans residues 62 to 65 (DTPG). GTP is bound by residues 62–66 (DTPGI) and 124–127 (NKID). A G4 region spans residues 124-127 (NKID). The interval 152 to 154 (ISA) is G5. Residues 204-281 (LQQELPYKLT…HLFLFVKVRE (78 aa)) form the KH type-2 domain.

The protein belongs to the TRAFAC class TrmE-Era-EngA-EngB-Septin-like GTPase superfamily. Era GTPase family. Monomer.

The protein localises to the cytoplasm. It is found in the cell inner membrane. Its function is as follows. An essential GTPase that binds both GDP and GTP, with rapid nucleotide exchange. Plays a role in 16S rRNA processing and 30S ribosomal subunit biogenesis and possibly also in cell cycle regulation and energy metabolism. The protein is GTPase Era of Rickettsia bellii (strain OSU 85-389).